The following is a 995-amino-acid chain: MNYIINLKMDYKDKALNDLRNVYADFDSLPLDFRQILIKDRATLLQKEDVEKKILERQEDAKKYAEYLKQSEIPERISLPNIKRHKGVSISFEETSEDMVLEPRPFIFDGLNIRCFRRETIFSLKNKILNMVKESSSFKNVSRQSVSFMYFKIFNKGKVIASTKSVNIYEDKIDERLEDLCNNFDDVLKKIIDVTYGYESLFVSETYSYVIFYAKSIYFPQPRCVNNWGNNIPNILTFDSFKLFTANKNNVSCIKQCSRFLWQKDFNTLEEMIEYKNGNICIVTPQLHINDVRDIKSFNDIRLYSESPIKTFSVIDNTITYLFYFKEHLGVIFNITKSRHDRRVTKFSPLSKFSDVKNITVCFDIESYFDPEKESNQVNIPFICCASIIYNKVIGNIVDFEGRDCVAQMIEYVVDICGELNISSVELIAHNGGGYDFHYILSSMYNPAAIKNILIRNNSFISFNFAHDGVKFSVKDSYSFLLCSLANASKAFLNEETFKKTDFPHHDLKTADDLYKVYKEWSSVNTEINHVVEKEKLLITSEHIVNFTKNDKSKTLIEWSKDYCRNDVLVLSKVWLEFKNAVEDIFNCELVDQTMTLAGLSYKLFQANMPFDVELRHPNKEDYFNMREALIGGRCISVNGIYKDVLCLDVKSLYPASMAFYDQPYGSFKRVSSRPKDELGIYYVRVTPNRNNKSNFFPIRSHNKITYNNFEESTYIAWYTNVDIDIGLSEGHNIEYIPFDSYGNIGYSWSKKGKIFEKYIKDVLYKLKIKYEKQNNKVKRNVIKIIMNSLWGKFAQKWVNFEYFIKSEDDIDFESEEAYKIWDTDFMLIKKIKESTYSSKPIQNGVFTLSWARYHMKSIWDAGAKEGAECIYSDTDSIFVHKEHFKKNAKFMLNGLKVPIIGSEVGQLELECEFDKLLCAGKKQYMGFYTYFQDGKPCIKEKKRFKGIPSNYIIPELYAHLLSGADKEAKIQFLKFRREWGSVKGYIENKTVKAT.

This sequence belongs to the DNA polymerase type-B family.

The catalysed reaction is DNA(n) + a 2'-deoxyribonucleoside 5'-triphosphate = DNA(n+1) + diphosphate. This is DNA polymerase (RF1) from Kluyveromyces lactis (strain ATCC 8585 / CBS 2359 / DSM 70799 / NBRC 1267 / NRRL Y-1140 / WM37) (Yeast).